The following is a 90-amino-acid chain: Small ribosomal subunit protein bS20 (90 aa).

The disordered stretch occupies residues 1–27 (MANSAQAKKRARQNEKRELHNASQRSA).

The protein belongs to the bacterial ribosomal protein bS20 family.

Functionally, binds directly to 16S ribosomal RNA. This Coxiella burnetii (strain CbuK_Q154) (Coxiella burnetii (strain Q154)) protein is Small ribosomal subunit protein bS20.